Consider the following 917-residue polypeptide: MATEAFVKPVVPNGHDGYEDEDEDDIPLVFKRNSNTAATTNRPSPINNAMRNSAIGSTKSSPPMRSPLTSPNRSASSSTRSSMMKPALPSSSSVQRSTLKSPLRDDRSVVAKERNGFGKAPSVSKSDDEDSEDDKPLSARLKLDSKEVTKQPSSSGRGSTQQAVQKSNMRPQGLSDYTKKKVLDERAPMSSTVQTKTSVGTSSSKPVHIEQKRPLVNNIDRNGLKPKTEGHSSQAPAKRPLEKGSSSNQSSVKRPKLSEPARPVKVEQGSHISATQDAKGKNLDASKPLRANQATVKEDNSDGDDHVPIASRMKSDSSNNKSSSAKPSSSKMIASSSRTIAQKPNKWVKDSKYSKSSKSLPSGDGQKKWKTLQHNGVIFPPPYKRHGVKILFQGKPVDLTPEQEEVATMFAVMRETEYYKKPKFRENFWNDWRKLLGKNHMIKSLDDCDFTPIYEWYMQEKETKKQMTAEEKRIVKEEKLKQEEKYMWAVLDGVRERIGNFRVEPPGLFRGRGEHPKMGKLKKRIRPCDITINIGKEAPIPECPIPGERWKEVKHDNTVTWLAFWSDPINPKEFKYVFLAASSSLKGQSDKEKYEKARKLHNHIGSIRAAYTKDFNNKDVTKRQIAVATYLIDKLALRAGNEKDDDEADTVGCCTLKVGNVECIPPNKLKFDFLGKDSIQYVNTVEVEPLVYKAIGQFQAGKSKTDDLFDELDTSKLNTHLKELMAGLTAKVFRTYNASITLDLMLSKETRDGDVPEKVVVYQQANKEVAIICNHQRTVSKSHGAQVEKLAVKIEELREQIKELNIDLDRAKKGRTPLMGSDGKRKRNLTPEALEKKIMQTQGKIEKMERDMQTKEDMKTVALGTSKINYMDPRITVAWCKRHDVPIEKIFNKSLLAKFAWAMDVDPEFRFCSSTDE.

Residues Met-1 to Lys-368 form a disordered region. The span at Arg-32 to Pro-63 shows a compositional bias: polar residues. Low complexity predominate over residues Ser-66 to Ser-82. Positions Pro-89–Lys-100 are enriched in polar residues. 2 stretches are compositionally biased toward basic and acidic residues: residues Pro-102 to Gly-116 and Asp-134 to Thr-149. Residues Lys-150–Arg-170 show a composition bias toward polar residues. Residues Tyr-177 to Ala-187 are compositionally biased toward basic and acidic residues. Over residues Met-189–Lys-205 the composition is skewed to polar residues. 2 stretches are compositionally biased toward basic and acidic residues: residues Lys-256 to Lys-265 and Val-296 to Val-307. Ser-301 bears the Phosphoserine mark. Low complexity predominate over residues Asp-316 to Arg-338. Interaction with DNA stretches follow at residues Lys-575 to Tyr-576, Arg-638 to Lys-643, and Thr-729 to Lys-731. The Topo IB-type catalytic domain occupies Ser-582–Cys-912. Residues Val-779–Met-858 adopt a coiled-coil conformation. The active-site O-(3'-phospho-DNA)-tyrosine intermediate is the Tyr-870.

This sequence belongs to the type IB topoisomerase family.

It localises to the nucleus. The catalysed reaction is ATP-independent breakage of single-stranded DNA, followed by passage and rejoining.. In terms of biological role, releases the supercoiling and torsional tension of DNA introduced during the DNA replication and transcription by transiently cleaving and rejoining one strand of the DNA duplex. Introduces a single-strand break via transesterification at a target site in duplex DNA. The scissile phosphodiester is attacked by the catalytic tyrosine of the enzyme, resulting in the formation of a DNA-(3'-phosphotyrosyl)-enzyme intermediate and the expulsion of a 5'-OH DNA strand. The free DNA strand then rotates around the intact phosphodiester bond on the opposing strand, thus removing DNA supercoils. Finally, in the religation step, the DNA 5'-OH attacks the covalent intermediate to expel the active-site tyrosine and restore the DNA phosphodiester backbone. Topoisomerases 1 enzymes (TOP1A and TOP1B) are essential for plant survival. The chain is DNA topoisomerase 1 beta from Arabidopsis thaliana (Mouse-ear cress).